Here is a 145-residue protein sequence, read N- to C-terminus: Natriuretic peptides A (145 aa).

The first 23 residues, 1-23 (MGTSFVGYLTFVLLLLALTKVRG), serve as a signal peptide directing secretion. The propeptide occupies 24–117 (GPAYNSPLSS…KLRELLNAPR (94 aa)). Cysteine 125 and cysteine 141 are joined by a disulfide.

This sequence belongs to the natriuretic peptide family. Post-translationally, cleaved upon secretion to produce the functional hormone.

It is found in the secreted. Its function is as follows. Hormone playing a key role in cardiovascular homeostasis through regulation of natriuresis, diuresis, and vasodilation. Has a cGMP-stimulating activity. The chain is Natriuretic peptides A from Aquarana catesbeiana (American bullfrog).